The primary structure comprises 530 residues: MAPSGCPPSLPLCVCLFLASGFAQAGRLLVVPMDGSHWFTMQMIVEKLSHRGHEVVVVIPEVSWHMGKSLNFTVKLLLVLNTLEDLNYHFKFFAHNQWKTQEVGMFSLLKHSGKGFFELLFSHCRSLFKDKKLVEYLKQSSFDAVFLDPFDVCGLILAKYFSLPSVVFSGGIFCHYLDEGAQCPSPPSYVPRILSKFTDTMTFKERVWNHLSYMKERAFCPYFFKTAVEIASEVLQTPVTMRDLFSPVSIWMFRTDFVLEFPRPMMPNMVYIGGINCHQGKPLSKEFEAYVNASGEHGIVVFSLGSMVSEIPEKKAMEIAEALGRIPQTLLWRYTGTRPSNLAKNTILVKWLPQNDLLGHPKARAFITHSGSHGIYEGICNGVPMVMMPLFGDQMDNAKRMETRGAGVTLNVLEMTADDLENALKTVINNKSYKENIMRLSSLHKDRPIEPLDLAVFWVEYVMRHKGAPHLRPAAHDLTWYQYHSLDVIGFLLAIVLTVVFIVYKSCAYGCRKCFGGKGRVKKSHKSKTH.

The N-terminal stretch at Met-1–Ala-25 is a signal peptide. Asn-71, Asn-292, and Asn-430 each carry an N-linked (GlcNAc...) asparagine glycan. A helical membrane pass occupies residues Val-488–Tyr-504.

This sequence belongs to the UDP-glycosyltransferase family. As to quaternary structure, homodimers. Homooligomer. Interacts with UGT1A1, UGT1A3, UGT1A4, UGT1A6, UGT1A7, UGT1A8, UGT1A9 and UGT1A10 to form heterodimers.

It localises to the endoplasmic reticulum membrane. The enzyme catalyses glucuronate acceptor + UDP-alpha-D-glucuronate = acceptor beta-D-glucuronoside + UDP + H(+). The catalysed reaction is 17beta-estradiol + UDP-alpha-D-glucuronate = 17beta-estradiol 3-O-(beta-D-glucuronate) + UDP + H(+). It carries out the reaction 17alpha-estradiol + UDP-alpha-D-glucuronate = 17alpha-estradiol 3-O-(beta-D-glucuronate) + UDP + H(+). It catalyses the reaction estrone + UDP-alpha-D-glucuronate = estrone 3-O-(beta-D-glucuronate) + UDP + H(+). The enzyme catalyses 16alpha,17alpha-estriol + UDP-alpha-D-glucuronate = 16alpha,17alpha-estriol 3-O-(beta-D-glucuronate) + UDP + H(+). The catalysed reaction is 2-hydroxy-17beta-estradiol + UDP-alpha-D-glucuronate = 2-hydroxy-17beta-estradiol 3-O-(beta-D-glucuronate) + UDP + H(+). It carries out the reaction 2-hydroxy-17beta-estradiol + UDP-alpha-D-glucuronate = 17beta-estradiol 2-O-(beta-D-glucuronate) + UDP + H(+). It catalyses the reaction 2-hydroxyestrone + UDP-alpha-D-glucuronate = 2-hydroxyestrone 3-O-(beta-D-glucuronate) + UDP + H(+). The enzyme catalyses 4-hydroxy-17beta-estradiol + UDP-alpha-D-glucuronate = 4-hydroxy-17beta-estradiol 3-O-(beta-D-glucuronate) + UDP + H(+). The catalysed reaction is 4-hydroxy-17beta-estradiol + UDP-alpha-D-glucuronate = 17beta-estradiol 4-O-(beta-D-glucuronate) + UDP + H(+). It carries out the reaction 4-hydroxyestrone + UDP-alpha-D-glucuronate = 4-hydroxyestrone 3-O-(beta-D-glucuronate) + UDP + H(+). It catalyses the reaction 4-hydroxyestrone + UDP-alpha-D-glucuronate = estrone 4-O-(beta-D-glucuronate) + UDP + H(+). The enzyme catalyses 2-methoxy-17beta-estradiol + UDP-alpha-D-glucuronate = 2-methoxy-17beta-estradiol 3-O-(beta-D-glucuronate) + UDP + H(+). The catalysed reaction is 2-methoxyestrone + UDP-alpha-D-glucuronate = 2-methoxyestrone 3-O-(beta-D-glucuronate) + UDP + H(+). It carries out the reaction 4-methoxy-17beta-estradiol + UDP-alpha-D-glucuronate = 4-methoxy-17beta-estradiol 3-O-(beta-D-glucuronate) + UDP + H(+). It catalyses the reaction 4-methoxyestrone + UDP-alpha-D-glucuronate = 4-methoxyestrone 3-O-(beta-D-glucuronate) + UDP + H(+). The enzyme catalyses 17beta-hydroxy-5alpha-androstan-3-one + UDP-alpha-D-glucuronate = 5alpha-dihydrotestosterone 17-O-(beta-D-glucuronate) + UDP + H(+). The catalysed reaction is 5alpha-dihydrotestosterone 17-O-(beta-D-glucuronate) + UDP-alpha-D-glucuronate = 5alpha-dihydrotestosterone 17-O-[beta-D-glucuronosyl-(1-&gt;2)-glucuronate] + UDP + H(+). It carries out the reaction prunetin + UDP-alpha-D-glucuronate = prunetin-4'-O-beta-D-glucuronide + UDP. It catalyses the reaction prunetin + UDP-alpha-D-glucuronate = prunetin-5-O-beta-D-glucuronide + UDP. The enzyme catalyses (E)-ferulate + UDP-alpha-D-glucuronate = (E)-4-O-(beta-D-glucuronosyl)-ferulate + UDP + H(+). The catalysed reaction is (E)-ferulate + UDP-alpha-D-glucuronate = (E)-ferulic acid beta-D-glucuronate ester + UDP. It carries out the reaction candesartan + UDP-alpha-D-glucuronate = candesartan O-beta-D-glucuronoside + UDP. It catalyses the reaction mycophenolate + UDP-alpha-D-glucuronate = mycophenolate 7-O-beta-D-glucuronide + UDP + H(+). UDP-glucuronosyltransferase (UGT) that catalyzes phase II biotransformation reactions in which lipophilic substrates are conjugated with glucuronic acid to increase the metabolite's water solubility, thereby facilitating excretion into either the urine or bile. Essential for the elimination and detoxification of drugs, xenobiotics and endogenous compounds. Catalyzes the glucuronidation of endogenous steroid hormones such as androgens and estrogens. Produces dihydrotestosterone (DHT) diglucuronide from the DHT after two subsequent glucoronidation steps. Involved in the glucuronidation of the phytochemical ferulic acid at the phenolic or the carboxylic acid group. Also catalyzes the glucuronidation of the isoflavones genistein, daidzein, glycitein, formononetin, biochanin A and prunetin, which are phytoestrogens with anticancer and cardiovascular properties. Involved in the glucuronidation of the AGTR1 angiotensin receptor antagonist caderastan, a drug which can inhibit the effect of angiotensin II. Also metabolizes mycophenolate, an immunosuppressive agent. The polypeptide is UDP-glucuronosyltransferase 1A8 (Rattus norvegicus (Rat)).